The following is a 444-amino-acid chain: MEYGHHARPDSKRPLDEGSPAAAGLTSKKANEALTRNRELTTVLVKNLPKSYNQNKVYKYFKHCGPIIHVDVADSLKKNFRFARIEFARYDGALAAITKTHKVVGQNEIIVSHLTECTLWMTNFPPSYTQRNIRDLLQDINVVALSIRLPSLRFNTSRRFAYIDVTSKEDARYCVEKLNGLKIEGYTLVTKVSNPLEKSKRTDSATLEGREIMIRNLSTELLDENLLRESFEGFGSIEKINIPAGQKEHSFNNCCAFMVFENKDSAERALQMNRSLLGNREISVSLADKKPFLERNEVKRLLASRNSKELETLICLFPLSDKVSPSLICQFLQEEIHINEKDIRKILLVSDFNGAIIIFRDSKFAAKMLMILNGSQFQGKVIRSGTINDMKRYYNNQQNHSMKHVKPSCINMMEKGPNLQVKKKIPDKQEQMSNDDFRKMFLGE.

The span at 1 to 16 (MEYGHHARPDSKRPLD) shows a compositional bias: basic and acidic residues. The segment at 1–29 (MEYGHHARPDSKRPLDEGSPAAAGLTSKK) is disordered. At serine 19 the chain carries Phosphoserine. 3 consecutive RRM domains span residues 41–116 (TTVL…HLTE), 117–195 (CTLW…VSNP), and 210–289 (REIM…LADK).

In terms of assembly, monomer. Interacts with U6 snRNA SNR6 and the LSM2-8 complex (small nuclear RNA); to chaperone formation of the U4/U6-U5 tri-snRNP (small nuclear ribonucleoprotein) assembly, the protein is displaced from the U4/U6 snRNP once pairing is complete.

It is found in the nucleus. In terms of biological role, functions as a recycling factor of the spliceosome, a machinery that forms on each precursor-messenger RNA (pre-mRNA) and catalyzes the removal of introns. Chaperones the re-annealing of U4 and U6 snRNAs (small nuclear RNAs) released from previous rounds of splicing, an initial step in reforming the U4/U6-U5 tri-snRNP (small nuclear ribonucleoprotein) that can reassemble into another spliceosome complex; this step involves binding U6 and facilitating the unwinding of the U6 internal stem loop, followed by base-pairing of U6 to U4. This chain is U4/U6 snRNA-associated-splicing factor PRP24 (PRP24), found in Saccharomyces cerevisiae (strain ATCC 204508 / S288c) (Baker's yeast).